Reading from the N-terminus, the 602-residue chain is UPF0329 protein ECU02_0060 (602 aa).

A compositionally biased stretch (basic and acidic residues) spans 313–345 (EEDERKRAEAESARNREELLRMEEREKGKEKGS). A disordered region spans residues 313–407 (EEDERKRAEA…SPKEESKGEE (95 aa)). The segment covering 346–356 (KGKGRKKRGKK) has biased composition (basic residues). Residues 357–369 (GAGEAKEESKEED) show a composition bias toward basic and acidic residues. Residues 370 to 384 (RGGEEEESVEADVPV) show a composition bias toward acidic residues.

It belongs to the UPF0329 family.

The polypeptide is UPF0329 protein ECU02_0060 (Encephalitozoon cuniculi (strain GB-M1) (Microsporidian parasite)).